Consider the following 336-residue polypeptide: Uridine nucleosidase 1 (336 aa).

Residues Asp-29 and His-260 contribute to the active site.

The protein belongs to the IUNH family. As to quaternary structure, homodimer. Component of the NSH heterocomplex made of URH1/NSH1 and URH2/NSH2 which exhibits strong xanthosine nucleosidase activity. Interacts with URH2. Expressed ubiquitously in leaves, flowers, stems, pollen cells, root tip meristem and root vasculature.

It is found in the cytoplasm. It catalyses the reaction uridine + H2O = D-ribose + uracil. The enzyme catalyses xanthosine + H2O = D-ribose + xanthine. It carries out the reaction inosine + H2O = hypoxanthine + D-ribose. The catalysed reaction is adenosine + H2O = D-ribose + adenine. Involved in purine and pyrimidine breakdown rather than in pyrimidine salvage, especially in response to dark stress. Together with URH2, required for efficient inosine and xanthosine hydrolytic activities. Unable to use cytidine as a substrate. Can use uridine, inosine, adenosine as well as the cytokinin derivative isopentenyladenine-riboside as substrates. Also hydrolyzes xanthosine with high efficiency. This Arabidopsis thaliana (Mouse-ear cress) protein is Uridine nucleosidase 1.